Here is an 803-residue protein sequence, read N- to C-terminus: Zinc finger X-linked protein ZXDB (803 aa).

3 disordered regions span residues Met-1 to Asp-91, Glu-120 to Thr-140, and Ala-218 to Gly-260. Residues Leu-13–Gly-26 show a composition bias toward gly residues. C2H2-type zinc fingers lie at residues Tyr-271–His-295, Phe-304–His-328, Phe-334–His-358, Phe-364–His-386, Tyr-393–His-417, Phe-424–His-448, Phe-454–His-478, Phe-484–His-508, Phe-514–His-538, and Ser-547–His-572. The segment at Tyr-271–Asp-577 is required for interaction with ZXDC. The required for transcriptional activation stretch occupies residues Gln-576 to Val-703.

The protein belongs to the ZXD family. Self-associates. Interacts with ZXDC and CIITA. In terms of tissue distribution, may be expressed in brain, heart, kidney, liver, lung, muscle and placenta.

It is found in the nucleus. Its function is as follows. Cooperates with CIITA to promote transcription of MHC class I and MHC class II genes. The protein is Zinc finger X-linked protein ZXDB (ZXDB) of Homo sapiens (Human).